We begin with the raw amino-acid sequence, 562 residues long: Ycf55-like protein (562 aa).

Positions 7-125 (TIVIVDEDPV…DLVTGLKQVH (119 aa)) constitute a Response regulatory domain.

This sequence belongs to the ycf55 family.

This is Ycf55-like protein from Synechocystis sp. (strain ATCC 27184 / PCC 6803 / Kazusa).